Here is a 604-residue protein sequence, read N- to C-terminus: Glutamine--fructose-6-phosphate aminotransferase [isomerizing] (604 aa).

The Nucleophile; for GATase activity role is filled by Cys2. Residues 2-218 (CGIVGVVGNT…DKELVIVKKD (217 aa)) form the Glutamine amidotransferase type-2 domain. SIS domains are found at residues 284 to 423 (IIKS…ANGK) and 456 to 594 (VEQL…VDKP). Residue Lys599 is the For Fru-6P isomerization activity of the active site.

Homodimer.

Its subcellular location is the cytoplasm. It catalyses the reaction D-fructose 6-phosphate + L-glutamine = D-glucosamine 6-phosphate + L-glutamate. Catalyzes the first step in hexosamine metabolism, converting fructose-6P into glucosamine-6P using glutamine as a nitrogen source. In Streptococcus agalactiae serotype V (strain ATCC BAA-611 / 2603 V/R), this protein is Glutamine--fructose-6-phosphate aminotransferase [isomerizing].